The following is a 151-amino-acid chain: Caveolin-3 (151 aa).

Topologically, residues methionine 1–proline 83 are cytoplasmic. A Glycyl lysine isopeptide (Lys-Gly) (interchain with G-Cter in SUMO3) cross-link involves residue lysine 38. The segment at threonine 64 to isoleucine 114 is required for interaction with DAG1. The helical intramembrane region spans leucine 84–valine 104. The Cytoplasmic portion of the chain corresponds to proline 105–glycine 151.

The protein belongs to the caveolin family. As to quaternary structure, homooligomer. Interacts with DYSF. Interacts with DLG1 and KCNA5; forms a ternary complex. Interacts with DAG1 (via its C-terminal); the interaction prevents binding of DAG1 with DMD. Interacts with TRIM72. Interacts with MUSK; may regulate MUSK signaling. Interacts with POPDC1. Interacts with CAVIN1, CAVIN2 and CAVIN4. Sumoylation with SUMO3 by PIAS4 may reduce agonist-induced internalization and desensitization of adrenergic receptor ABRD2. In terms of tissue distribution, expressed predominantly in muscle.

Its subcellular location is the golgi apparatus membrane. The protein resides in the cell membrane. It localises to the membrane. It is found in the caveola. The protein localises to the sarcolemma. In terms of biological role, may act as a scaffolding protein within caveolar membranes. Interacts directly with G-protein alpha subunits and can functionally regulate their activity. May also regulate voltage-gated potassium channels. Plays a role in the sarcolemma repair mechanism of both skeletal muscle and cardiomyocytes that permits rapid resealing of membranes disrupted by mechanical stress. Mediates the recruitment of CAVIN2 and CAVIN3 proteins to the caveolae. The polypeptide is Caveolin-3 (Mus musculus (Mouse)).